We begin with the raw amino-acid sequence, 85 residues long: Phosphocarrier protein HPr (85 aa).

Residues 1–85 enclose the HPr domain; the sequence is MFQKEIKINA…HLSKIMTELE (85 aa). His15 acts as the Pros-phosphohistidine intermediate in catalysis.

This sequence belongs to the HPr family.

It is found in the cytoplasm. Functionally, general (non sugar-specific) component of the phosphoenolpyruvate-dependent sugar phosphotransferase system (sugar PTS). This major carbohydrate active-transport system catalyzes the phosphorylation of incoming sugar substrates concomitantly with their translocation across the cell membrane. The phosphoryl group from phosphoenolpyruvate (PEP) is transferred to the phosphoryl carrier protein HPr by enzyme I. Phospho-HPr then transfers it to the PTS EIIA domain. The polypeptide is Phosphocarrier protein HPr (ptsH) (Buchnera aphidicola subsp. Schizaphis graminum (strain Sg)).